The sequence spans 548 residues: Putative F-box protein At1g33020 (548 aa).

The region spanning 4 to 53 (AENLDSIPTDLILEIFSRMSTKSIGRCRCVSKLWKSMLGHPYFTELFLTR) is the F-box domain. The interval 380-404 (KPISPPKQKPKPPSTETSSREDHQG) is disordered. Residues 382-392 (ISPPKQKPKPP) show a composition bias toward pro residues.

The protein is Putative F-box protein At1g33020 of Arabidopsis thaliana (Mouse-ear cress).